Reading from the N-terminus, the 121-residue chain is Putative inactive aspartokinase 3 HI_1632 (121 aa).

It belongs to the aspartokinase family.

The sequence is that of Putative inactive aspartokinase 3 HI_1632 from Haemophilus influenzae (strain ATCC 51907 / DSM 11121 / KW20 / Rd).